The following is a 215-amino-acid chain: Pyridoxine/pyridoxamine 5'-phosphate oxidase (215 aa).

Substrate-binding positions include 9–12 (RRDY) and K69. FMN is bound by residues 64-69 (RVLLLK), 79-80 (FT), K86, and Q108. 3 residues coordinate substrate: Y126, R130, and S134. FMN is bound by residues 143–144 (QS) and W188. Residue 194–196 (RLH) participates in substrate binding. R198 contributes to the FMN binding site.

Belongs to the pyridoxamine 5'-phosphate oxidase family. In terms of assembly, homodimer. It depends on FMN as a cofactor.

The catalysed reaction is pyridoxamine 5'-phosphate + O2 + H2O = pyridoxal 5'-phosphate + H2O2 + NH4(+). It catalyses the reaction pyridoxine 5'-phosphate + O2 = pyridoxal 5'-phosphate + H2O2. The protein operates within cofactor metabolism; pyridoxal 5'-phosphate salvage; pyridoxal 5'-phosphate from pyridoxamine 5'-phosphate: step 1/1. It functions in the pathway cofactor metabolism; pyridoxal 5'-phosphate salvage; pyridoxal 5'-phosphate from pyridoxine 5'-phosphate: step 1/1. Its function is as follows. Catalyzes the oxidation of either pyridoxine 5'-phosphate (PNP) or pyridoxamine 5'-phosphate (PMP) into pyridoxal 5'-phosphate (PLP). The sequence is that of Pyridoxine/pyridoxamine 5'-phosphate oxidase from Pseudomonas entomophila (strain L48).